A 1084-amino-acid polypeptide reads, in one-letter code: Siderophore biosynthesis regulatory protein URBS1 (1084 aa).

Disordered stretches follow at residues Met1 to Ser164, Ala245 to Tyr283, and Arg300 to Arg337. Positions Gln23–Ala51 are enriched in low complexity. Composition is skewed to polar residues over residues Ser97–Thr106 and Arg128–Gln141. The segment covering Pro150–Ser164 has biased composition (low complexity). Residues Ala245–Arg260 show a composition bias toward basic and acidic residues. The segment at Cys338 to Cys362 adopts a GATA-type 1 zinc-finger fold. 2 disordered regions span residues His372–Asp405 and Val442–Asp472. Polar residues predominate over residues Arg373–Ser385. The GATA-type 2 zinc finger occupies Cys482–Cys506. Disordered stretches follow at residues Ile559–Ala595, Arg643–Asp679, Thr692–Ser803, Glu841–Asn940, Ala953–Trp1019, and Ala1040–Thr1084. Basic and acidic residues-rich tracts occupy residues Arg650 to Ser659 and Arg715 to Ser725. A compositionally biased stretch (basic residues) spans Pro752–Pro781. Positions Arg875–Ala888 are enriched in basic and acidic residues. The span at Ser961–Ala970 shows a compositional bias: polar residues. Residues Pro1070–Thr1084 show a composition bias toward low complexity.

The protein localises to the nucleus. Involved in the regulation of secreted ferrichrome-type siderophores. Acts directly or indirectly to repress the biosynthesis of siderophores. The polypeptide is Siderophore biosynthesis regulatory protein URBS1 (URBS1) (Mycosarcoma maydis (Corn smut fungus)).